Consider the following 628-residue polypeptide: Chaperone protein HtpG (628 aa).

Positions 1-340 are a; substrate-binding; the sequence is MKGQETRGFQ…SNDLPLNVSR (340 aa). The b stretch occupies residues 341-556; it reads EILQDSRVTQ…ADDMTTQMAK (216 aa). A c region spans residues 557 to 628; that stretch reads LFAAAGQAAP…IRRMNQLLNA (72 aa).

Belongs to the heat shock protein 90 family. Homodimer.

It is found in the cytoplasm. Molecular chaperone. Has ATPase activity. In Sodalis glossinidius (strain morsitans), this protein is Chaperone protein HtpG.